Here is a 274-residue protein sequence, read N- to C-terminus: Elongation factor Ts (274 aa).

The involved in Mg(2+) ion dislocation from EF-Tu stretch occupies residues 76–79 (TDFV).

Belongs to the EF-Ts family.

It is found in the cytoplasm. In terms of biological role, associates with the EF-Tu.GDP complex and induces the exchange of GDP to GTP. It remains bound to the aminoacyl-tRNA.EF-Tu.GTP complex up to the GTP hydrolysis stage on the ribosome. In Mycobacterium sp. (strain JLS), this protein is Elongation factor Ts.